Consider the following 311-residue polypeptide: N-acetylmuramic acid 6-phosphate etherase (311 aa).

In terms of domain architecture, SIS spans 66–230 (VVEAFEADGR…TTAAMVRLGK (165 aa)). Catalysis depends on glutamate 94, which acts as the Proton donor. The active site involves glutamate 125.

Belongs to the GCKR-like family. MurNAc-6-P etherase subfamily. As to quaternary structure, homodimer.

The enzyme catalyses N-acetyl-D-muramate 6-phosphate + H2O = N-acetyl-D-glucosamine 6-phosphate + (R)-lactate. The protein operates within amino-sugar metabolism; N-acetylmuramate degradation. In terms of biological role, specifically catalyzes the cleavage of the D-lactyl ether substituent of MurNAc 6-phosphate, producing GlcNAc 6-phosphate and D-lactate. The sequence is that of N-acetylmuramic acid 6-phosphate etherase from Salinibacter ruber (strain DSM 13855 / M31).